The chain runs to 244 residues: tRNA pseudouridine synthase A (244 aa).

D52 serves as the catalytic Nucleophile. Residue Y110 coordinates substrate.

The protein belongs to the tRNA pseudouridine synthase TruA family. Homodimer.

The enzyme catalyses uridine(38/39/40) in tRNA = pseudouridine(38/39/40) in tRNA. Formation of pseudouridine at positions 38, 39 and 40 in the anticodon stem and loop of transfer RNAs. This Acetivibrio thermocellus (strain ATCC 27405 / DSM 1237 / JCM 9322 / NBRC 103400 / NCIMB 10682 / NRRL B-4536 / VPI 7372) (Clostridium thermocellum) protein is tRNA pseudouridine synthase A.